The primary structure comprises 128 residues: Fluoride-specific ion channel FluC (128 aa).

Transmembrane regions (helical) follow at residues 4-24 (LLLVAAGGALGSVARYLVGVQ), 37-57 (TFIVNLTGGLLMGLLAAWLAL), 72-92 (VGVMGGFTTFSAFSLETALMI), and 101-121 (FTYTTASVILSVAAIFAGLLI). Glycine 76 and threonine 79 together coordinate Na(+).

This sequence belongs to the fluoride channel Fluc/FEX (TC 1.A.43) family.

It localises to the cell inner membrane. It catalyses the reaction fluoride(in) = fluoride(out). With respect to regulation, na(+) is not transported, but it plays an essential structural role and its presence is essential for fluoride channel function. Functionally, fluoride-specific ion channel. Important for reducing fluoride concentration in the cell, thus reducing its toxicity. In Caulobacter sp. (strain K31), this protein is Fluoride-specific ion channel FluC.